We begin with the raw amino-acid sequence, 615 residues long: Membrane protein insertase YidC (615 aa).

A run of 5 helical transmembrane segments spans residues 9 to 29 (LMFI…VLGP), 384 to 404 (LVGN…LVLY), 458 to 478 (LPML…TVTI), 516 to 536 (LIGA…FTMW), and 556 to 576 (WFPV…VIYW).

It belongs to the OXA1/ALB3/YidC family. Type 1 subfamily. In terms of assembly, interacts with the Sec translocase complex via SecD. Specifically interacts with transmembrane segments of nascent integral membrane proteins during membrane integration.

It localises to the cell inner membrane. In terms of biological role, required for the insertion and/or proper folding and/or complex formation of integral membrane proteins into the membrane. Involved in integration of membrane proteins that insert both dependently and independently of the Sec translocase complex, as well as at least some lipoproteins. Aids folding of multispanning membrane proteins. This Caulobacter vibrioides (strain ATCC 19089 / CIP 103742 / CB 15) (Caulobacter crescentus) protein is Membrane protein insertase YidC.